We begin with the raw amino-acid sequence, 198 residues long: Nascent polypeptide-associated complex subunit alpha (198 aa).

One can recognise an NAC-A/B domain in the interval 48-113 (ITRVVLKRTR…QAAAETGSVS (66 aa)). Residues 159–198 (LEDSDIKLVMEQANVSRNKAINGLKKNDSDVVNTIMDLCK) enclose the UBA domain.

This sequence belongs to the NAC-alpha family. As to quaternary structure, part of the nascent polypeptide-associated complex (NAC), consisting of EGD2 and EGD1. NAC associates with ribosomes via EGD1.

The protein resides in the cytoplasm. Its subcellular location is the nucleus. Functionally, component of the nascent polypeptide-associated complex (NAC), a dynamic component of the ribosomal exit tunnel, protecting the emerging polypeptides from interaction with other cytoplasmic proteins to ensure appropriate nascent protein targeting. The NAC complex also promotes mitochondrial protein import by enhancing productive ribosome interactions with the outer mitochondrial membrane and blocks the inappropriate interaction of ribosomes translating non-secretory nascent polypeptides with translocation sites in the membrane of the endoplasmic reticulum. EGD2 may also be involved in transcription regulation. In Yarrowia lipolytica (strain CLIB 122 / E 150) (Yeast), this protein is Nascent polypeptide-associated complex subunit alpha (EGD2).